The chain runs to 607 residues: Phosphogluconate dehydratase (607 aa).

2 residues coordinate [4Fe-4S] cluster: cysteine 156 and cysteine 223.

The protein belongs to the IlvD/Edd family. [4Fe-4S] cluster is required as a cofactor.

The enzyme catalyses 6-phospho-D-gluconate = 2-dehydro-3-deoxy-6-phospho-D-gluconate + H2O. It functions in the pathway carbohydrate metabolism; Entner-Doudoroff pathway. Catalyzes the dehydration of 6-phospho-D-gluconate to 2-dehydro-3-deoxy-6-phospho-D-gluconate. The chain is Phosphogluconate dehydratase from Zymomonas mobilis subsp. mobilis (strain ATCC 31821 / ZM4 / CP4).